Reading from the N-terminus, the 263-residue chain is Metaxin-2 (263 aa).

Serine 2 carries the N-acetylserine modification.

The protein belongs to the metaxin family. Interacts with MTX1/metaxin-1. Associates with the mitochondrial contact site and cristae organizing system (MICOS) complex, composed of at least MICOS10/MIC10, CHCHD3/MIC19, CHCHD6/MIC25, APOOL/MIC27, IMMT/MIC60, APOO/MIC23/MIC26 and QIL1/MIC13. This complex was also known under the names MINOS or MitOS complex. The MICOS complex associates with mitochondrial outer membrane proteins SAMM50, MTX1 and MTX2 (together described as components of the mitochondrial outer membrane sorting assembly machinery (SAM) complex) and DNAJC11, mitochondrial inner membrane protein TMEM11 and with HSPA9. The MICOS and SAM complexes together with DNAJC11 are part of a large protein complex spanning both membranes termed the mitochondrial intermembrane space bridging (MIB) complex.

It localises to the mitochondrion outer membrane. It is found in the mitochondrion. Its function is as follows. Involved in transport of proteins into the mitochondrion. The sequence is that of Metaxin-2 (MTX2) from Homo sapiens (Human).